We begin with the raw amino-acid sequence, 110 residues long: UPF0060 membrane protein Dtpsy_1668 (110 aa).

4 consecutive transmembrane segments (helical) span residues 7–27 (LALF…PWLW), 33–53 (SAWL…LLTL), 63–83 (AAYG…VDGV), and 86–106 (GPWD…IAFA).

It belongs to the UPF0060 family.

Its subcellular location is the cell inner membrane. This Acidovorax ebreus (strain TPSY) (Diaphorobacter sp. (strain TPSY)) protein is UPF0060 membrane protein Dtpsy_1668.